We begin with the raw amino-acid sequence, 645 residues long: Lipase 1 (645 aa).

Residues 1–24 (MKRSFIFAPGMLALSISAISNAHA) form the signal peptide. The Nucleophile role is filled by serine 34. Catalysis depends on residues aspartate 327 and histidine 330. The Autotransporter domain occupies 383–645 (NEQGKLGVFG…SFSLGVNASF (263 aa)).

It belongs to the 'GDSL' lipolytic enzyme family.

The protein localises to the secreted. The catalysed reaction is a triacylglycerol + H2O = a diacylglycerol + a fatty acid + H(+). The sequence is that of Lipase 1 (lip-1) from Photorhabdus luminescens (Xenorhabdus luminescens).